We begin with the raw amino-acid sequence, 459 residues long: Bifunctional protein GlmU (459 aa).

Positions 1–230 are pyrophosphorylase; the sequence is MSNRFAVILA…FDETLGVNDR (230 aa). UDP-N-acetyl-alpha-D-glucosamine is bound by residues 9–12, K23, Q73, and 78–79; these read LAAG and GT. Residue D103 coordinates Mg(2+). Residues G140, E155, N170, and N228 each coordinate UDP-N-acetyl-alpha-D-glucosamine. N228 contributes to the Mg(2+) binding site. The segment at 231–251 is linker; sequence VALSQAEIIMKNRINRKNMVN. Residues 252–459 form an N-acetyltransferase region; the sequence is GVTIIDPSNT…VDQLLNKKKS (208 aa). The UDP-N-acetyl-alpha-D-glucosamine site is built by R333 and K351. H363 (proton acceptor) is an active-site residue. The UDP-N-acetyl-alpha-D-glucosamine site is built by Y366 and N377. Residues 386-387, A423, and R440 contribute to the acetyl-CoA site; that span reads NY.

The protein in the N-terminal section; belongs to the N-acetylglucosamine-1-phosphate uridyltransferase family. It in the C-terminal section; belongs to the transferase hexapeptide repeat family. In terms of assembly, homotrimer. Requires Mg(2+) as cofactor.

Its subcellular location is the cytoplasm. It carries out the reaction alpha-D-glucosamine 1-phosphate + acetyl-CoA = N-acetyl-alpha-D-glucosamine 1-phosphate + CoA + H(+). It catalyses the reaction N-acetyl-alpha-D-glucosamine 1-phosphate + UTP + H(+) = UDP-N-acetyl-alpha-D-glucosamine + diphosphate. It participates in nucleotide-sugar biosynthesis; UDP-N-acetyl-alpha-D-glucosamine biosynthesis; N-acetyl-alpha-D-glucosamine 1-phosphate from alpha-D-glucosamine 6-phosphate (route II): step 2/2. The protein operates within nucleotide-sugar biosynthesis; UDP-N-acetyl-alpha-D-glucosamine biosynthesis; UDP-N-acetyl-alpha-D-glucosamine from N-acetyl-alpha-D-glucosamine 1-phosphate: step 1/1. It functions in the pathway bacterial outer membrane biogenesis; LPS lipid A biosynthesis. In terms of biological role, catalyzes the last two sequential reactions in the de novo biosynthetic pathway for UDP-N-acetylglucosamine (UDP-GlcNAc). The C-terminal domain catalyzes the transfer of acetyl group from acetyl coenzyme A to glucosamine-1-phosphate (GlcN-1-P) to produce N-acetylglucosamine-1-phosphate (GlcNAc-1-P), which is converted into UDP-GlcNAc by the transfer of uridine 5-monophosphate (from uridine 5-triphosphate), a reaction catalyzed by the N-terminal domain. This is Bifunctional protein GlmU from Bacillus anthracis (strain A0248).